The chain runs to 240 residues: Ubiquinone biosynthesis O-methyltransferase (240 aa).

4 residues coordinate S-adenosyl-L-methionine: Arg36, Gly66, Asp87, and Met129.

Belongs to the methyltransferase superfamily. UbiG/COQ3 family.

The catalysed reaction is a 3-demethylubiquinol + S-adenosyl-L-methionine = a ubiquinol + S-adenosyl-L-homocysteine + H(+). It catalyses the reaction a 3-(all-trans-polyprenyl)benzene-1,2-diol + S-adenosyl-L-methionine = a 2-methoxy-6-(all-trans-polyprenyl)phenol + S-adenosyl-L-homocysteine + H(+). Its pathway is cofactor biosynthesis; ubiquinone biosynthesis. Functionally, O-methyltransferase that catalyzes the 2 O-methylation steps in the ubiquinone biosynthetic pathway. In Pelagibacter ubique (strain HTCC1062), this protein is Ubiquinone biosynthesis O-methyltransferase.